A 498-amino-acid chain; its full sequence is Guanosine-5'-triphosphate,3'-diphosphate pyrophosphatase (498 aa).

The protein belongs to the GppA/Ppx family. GppA subfamily.

The catalysed reaction is guanosine 3'-diphosphate 5'-triphosphate + H2O = guanosine 3',5'-bis(diphosphate) + phosphate + H(+). The protein operates within purine metabolism; ppGpp biosynthesis; ppGpp from GTP: step 2/2. Functionally, catalyzes the conversion of pppGpp to ppGpp. Guanosine pentaphosphate (pppGpp) is a cytoplasmic signaling molecule which together with ppGpp controls the 'stringent response', an adaptive process that allows bacteria to respond to amino acid starvation, resulting in the coordinated regulation of numerous cellular activities. The chain is Guanosine-5'-triphosphate,3'-diphosphate pyrophosphatase from Serratia proteamaculans (strain 568).